Consider the following 465-residue polypeptide: Cysteine--tRNA ligase (465 aa).

Cys-27 provides a ligand contact to Zn(2+). A 'HIGH' region motif is present at residues 29–39 (PTVYDDAHLGH). 3 residues coordinate Zn(2+): Cys-207, His-237, and Glu-241. The 'KMSKS' region motif lies at 269 to 273 (KMSKS). An ATP-binding site is contributed by Lys-272.

This sequence belongs to the class-I aminoacyl-tRNA synthetase family. As to quaternary structure, monomer. Zn(2+) is required as a cofactor.

The protein resides in the cytoplasm. It carries out the reaction tRNA(Cys) + L-cysteine + ATP = L-cysteinyl-tRNA(Cys) + AMP + diphosphate. This is Cysteine--tRNA ligase from Helicobacter pylori (strain HPAG1).